Consider the following 88-residue polypeptide: Phosphocarrier protein HPr (88 aa).

Residues 1-88 enclose the HPr domain; sequence MEQQSYTIID…DVLSKEGLTE (88 aa). H15 functions as the Pros-phosphohistidine intermediate in the catalytic mechanism. S46 carries the post-translational modification Phosphoserine; by HPrK/P.

Belongs to the HPr family.

It localises to the cytoplasm. Phosphorylation on Ser-46 inhibits the phosphoryl transfer from enzyme I to HPr. Its function is as follows. General (non sugar-specific) component of the phosphoenolpyruvate-dependent sugar phosphotransferase system (sugar PTS). This major carbohydrate active-transport system catalyzes the phosphorylation of incoming sugar substrates concomitantly with their translocation across the cell membrane. The phosphoryl group from phosphoenolpyruvate (PEP) is transferred to the phosphoryl carrier protein HPr by enzyme I. Phospho-HPr then transfers it to the PTS EIIA domain. P-Ser-HPr interacts with the catabolite control protein A (CcpA), forming a complex that binds to DNA at the catabolite response elements cre, operator sites preceding a large number of catabolite-regulated genes. Thus, P-Ser-HPr is a corepressor in carbon catabolite repression (CCR), a mechanism that allows bacteria to coordinate and optimize the utilization of available carbon sources. P-Ser-HPr also plays a role in inducer exclusion, in which it probably interacts with several non-PTS permeases and inhibits their transport activity. This Staphylococcus carnosus protein is Phosphocarrier protein HPr (ptsH).